Consider the following 529-residue polypeptide: ATP synthase subunit alpha (529 aa).

ATP is bound at residue 173 to 180 (GDRQTGKT).

The protein belongs to the ATPase alpha/beta chains family. As to quaternary structure, F-type ATPases have 2 components, CF(1) - the catalytic core - and CF(0) - the membrane proton channel. CF(1) has five subunits: alpha(3), beta(3), gamma(1), delta(1), epsilon(1). CF(0) has three main subunits: a(1), b(2) and c(9-12). The alpha and beta chains form an alternating ring which encloses part of the gamma chain. CF(1) is attached to CF(0) by a central stalk formed by the gamma and epsilon chains, while a peripheral stalk is formed by the delta and b chains.

The protein localises to the cell membrane. It catalyses the reaction ATP + H2O + 4 H(+)(in) = ADP + phosphate + 5 H(+)(out). Functionally, produces ATP from ADP in the presence of a proton gradient across the membrane. The alpha chain is a regulatory subunit. The protein is ATP synthase subunit alpha of Streptomyces avermitilis (strain ATCC 31267 / DSM 46492 / JCM 5070 / NBRC 14893 / NCIMB 12804 / NRRL 8165 / MA-4680).